Consider the following 820-residue polypeptide: Probable ATP-dependent RNA helicase DDX23 (820 aa).

Basic and acidic residues predominate over residues 1-42 (MAGELADKKDRDASPSKEERKRSRTPDRERDRDRDRKSSPSK). The disordered stretch occupies residues 1–244 (MAGELADKKD…QKIREEKDKS (244 aa)). A phosphoserine mark is found at serine 14 and serine 16. Over residues 43–65 (DRKRHRSRDRRRGGSRSRSRSRS) the composition is skewed to basic residues. The segment covering 66–105 (KSAERERRHKERERDKERDRNKKDRDRDKDGHRRDKDRKR) has biased composition (basic and acidic residues). 2 positions are modified to phosphoserine: serine 107 and serine 109. Basic and acidic residues-rich tracts occupy residues 112 to 137 (RGKD…DKKP), 147 to 226 (LLAK…RETN), and 233 to 244 (GRQKIREEKDKS). Residues 391-419 (RSWKDSSLPPHILEVIDKCGYKEPTPIQR) carry the Q motif motif. The region spanning 422–627 (IPIGLQNRDI…RSYLRRPAVV (206 aa)) is the Helicase ATP-binding domain. Residue 435 to 442 (AETGSGKT) participates in ATP binding. The DEAD box motif lies at 549-552 (DEAD). Residues 651–799 (KRKKLLAILE…SCPPELANHP (149 aa)) form the Helicase C-terminal domain. Residues lysine 686 and lysine 811 each participate in a glycyl lysine isopeptide (Lys-Gly) (interchain with G-Cter in SUMO2) cross-link.

It belongs to the DEAD box helicase family. DDX23/PRP28 subfamily. As to quaternary structure, the phosphorylated form (by SRPK2) is a component of the U4/U6-U5 tri-snRNP complex composed of the U4, U6 and U5 snRNAs and at least PRPF3, PRPF4, PRPF6, PRPF8, PRPF31, SNRNP200, TXNL4A, WDR57, SNRNP40, DDX23, CD2BP2, PPIH, SNU13, EFTUD2, SART1 and USP39. Identified in the spliceosome C complex. Interacts with ERBB4. Interacts with ERCC6. In vitro phosphorylated by CLK1 and U1 snRNP-associated protein kinase. Phosphorylated by SRPK2 and this phosphorylation is required for its association with the tri-snRNP (U4/U6-U5 tri-small nuclear ribonucleoproteins) and subsequent spliceosomal B complex formation. May be phosphorylated by SRPK2 on Ser residues in the SR domain; the phosphorylation is required for the removal of inappropriate R-loops during transcription.

The protein localises to the nucleus. Its subcellular location is the chromosome. It catalyses the reaction ATP + H2O = ADP + phosphate + H(+). In terms of biological role, involved in pre-mRNA splicing and its phosphorylated form (by SRPK2) is required for spliceosomal B complex formation. Independently of its spliceosome formation function, required for the suppression of incorrect R-loops formed during transcription; R-loops are composed of a DNA:RNA hybrid and the associated non-template single-stranded DNA. In Homo sapiens (Human), this protein is Probable ATP-dependent RNA helicase DDX23.